A 92-amino-acid chain; its full sequence is C-C motif chemokine 3 (92 aa).

The first 23 residues, 1–23 (MKVSTTALAVLLCTMTLCNQVFS), serve as a signal peptide directing secretion. Intrachain disulfides connect Cys34–Cys57 and Cys35–Cys73.

This sequence belongs to the intercrine beta (chemokine CC) family. Self-associates. Also heterodimer of MIP-1-alpha(4-69) and MIP-1-beta(3-69). Interacts with CCR1. As to expression, expressed in lung, spleen, and pancreas.

The protein localises to the secreted. Functionally, monokine with inflammatory and chemokinetic properties. Binds to CCR1, CCR4 and CCR5. One of the major HIV-suppressive factors produced by CD8+ T-cells. Recombinant MIP-1-alpha induces a dose-dependent inhibition of different strains of HIV-1, HIV-2, and simian immunodeficiency virus (SIV). The sequence is that of C-C motif chemokine 3 (Ccl3) from Mus musculus (Mouse).